The chain runs to 312 residues: Ribonuclease Z (312 aa).

The Zn(2+) site is built by His-63, His-65, Asp-67, His-68, His-141, Asp-212, and His-270. The active-site Proton acceptor is the Asp-67.

This sequence belongs to the RNase Z family. In terms of assembly, homodimer. Requires Zn(2+) as cofactor.

The catalysed reaction is Endonucleolytic cleavage of RNA, removing extra 3' nucleotides from tRNA precursor, generating 3' termini of tRNAs. A 3'-hydroxy group is left at the tRNA terminus and a 5'-phosphoryl group is left at the trailer molecule.. Zinc phosphodiesterase, which displays some tRNA 3'-processing endonuclease activity. Probably involved in tRNA maturation, by removing a 3'-trailer from precursor tRNA. The chain is Ribonuclease Z from Lactobacillus acidophilus (strain ATCC 700396 / NCK56 / N2 / NCFM).